The chain runs to 623 residues: (-)-limonene synthase TPS1, chloroplastic (623 aa).

The transit peptide at 1 to 60 (MQCIAFHQFASSSSLPIWSSIDNRFTPKTSITSISKPKPKLKSKSNLKSRSRSSTCYPIQ) directs the protein to the chloroplast. The interval 29–52 (TSITSISKPKPKLKSKSNLKSRSR) is disordered. A compositionally biased stretch (basic residues) spans 37 to 51 (PKPKLKSKSNLKSRS). (2E)-geranyl diphosphate contacts are provided by Arg337, Asp374, Asp378, Arg516, and Asp519. Residues Asp374 and Asp378 each contribute to the Mg(2+) site. The DDXXD motif motif lies at 374-378 (DDMHD). The Mg(2+) site is built by Asp519, Thr523, and Glu527.

It belongs to the terpene synthase family. Tpsb subfamily. Mg(2+) serves as cofactor. It depends on Mn(2+) as a cofactor. K(+) is required as a cofactor. Trichome.

It localises to the plastid. The protein resides in the chloroplast. It catalyses the reaction (2E)-geranyl diphosphate = (4S)-limonene + diphosphate. The catalysed reaction is (2E)-geranyl diphosphate = terpinolene + diphosphate. The enzyme catalyses (2E)-geranyl diphosphate = (1R,5R)-alpha-pinene + diphosphate. It carries out the reaction (2E)-geranyl diphosphate = (1R,5R)-beta-pinene + diphosphate. It catalyses the reaction (2E)-geranyl diphosphate = beta-myrcene + diphosphate. The catalysed reaction is (2E)-geranyl diphosphate = (4R)-limonene + diphosphate. It functions in the pathway secondary metabolite biosynthesis; terpenoid biosynthesis. Its pathway is terpene metabolism; (4S)-limonene biosynthesis; (4S)-limonene from geranyl diphosphate: step 1/1. Functionally, involved in monoterpene (C10) olefins biosynthesis, constituants of cannabinoids and terpenoids-rich resins. Catalyzes mainly the conversion of (2E)-geranyl diphosphate to (-)-limonene, and also produces minor products such as (+)-limonene, (+)-alpha-pinene, terpinolene, (+)-beta-pinene and beta-myrcene. The sequence is that of (-)-limonene synthase TPS1, chloroplastic from Cannabis sativa (Hemp).